A 130-amino-acid polypeptide reads, in one-letter code: Ribosome-binding factor A (130 aa).

Belongs to the RbfA family. As to quaternary structure, monomer. Binds 30S ribosomal subunits, but not 50S ribosomal subunits or 70S ribosomes.

It localises to the cytoplasm. In terms of biological role, one of several proteins that assist in the late maturation steps of the functional core of the 30S ribosomal subunit. Associates with free 30S ribosomal subunits (but not with 30S subunits that are part of 70S ribosomes or polysomes). Required for efficient processing of 16S rRNA. May interact with the 5'-terminal helix region of 16S rRNA. This Prochlorococcus marinus (strain AS9601) protein is Ribosome-binding factor A.